The chain runs to 329 residues: DNA-directed RNA polymerase subunit alpha (329 aa).

An alpha N-terminal domain (alpha-NTD) region spans residues 1-235 (MQGSVTEFLK…EQLEAFVDLR (235 aa)). Residues 249–329 (FDPILLRPVD…NWPPASIADE (81 aa)) form an alpha C-terminal domain (alpha-CTD) region.

The protein belongs to the RNA polymerase alpha chain family. Homodimer. The RNAP catalytic core consists of 2 alpha, 1 beta, 1 beta' and 1 omega subunit. When a sigma factor is associated with the core the holoenzyme is formed, which can initiate transcription.

It catalyses the reaction RNA(n) + a ribonucleoside 5'-triphosphate = RNA(n+1) + diphosphate. DNA-dependent RNA polymerase catalyzes the transcription of DNA into RNA using the four ribonucleoside triphosphates as substrates. The sequence is that of DNA-directed RNA polymerase subunit alpha from Sodalis glossinidius (strain morsitans).